The sequence spans 143 residues: Oxoglutarate dehydrogenase inhibitor (143 aa).

Thr-14 is subject to Phosphothreonine. The 50-residue stretch at 68 to 117 (TTAGRHPESDIFLDDVTVSRRHAEFRINEGEFEVVDVGSLNGTYVNREPR) folds into the FHA domain.

The protein resides in the cytoplasm. In terms of biological role, an essential component of the PknG signaling pathway. When unphosphorylated, it inhibits the activity of 2-oxoglutarate dehydrogenase. When phosphorylated it does not inhibit 2-oxoglutarate dehydrogenase. The protein is Oxoglutarate dehydrogenase inhibitor (odhI) of Corynebacterium glutamicum (strain ATCC 13032 / DSM 20300 / JCM 1318 / BCRC 11384 / CCUG 27702 / LMG 3730 / NBRC 12168 / NCIMB 10025 / NRRL B-2784 / 534).